The following is a 430-amino-acid chain: 2-deoxy-scyllo-inosose synthase (430 aa).

Residues aspartate 42, 73–76 (EVHK), 105–109 (GVTGN), 129–130 (TT), 140–142 (SLK), and 151–152 (KN) contribute to the NAD(+) site. Lysine 142 is an active-site residue. Glutamate 184 lines the Co(2+) pocket. The active site involves glutamate 244. Histidine 247 and histidine 263 together coordinate Co(2+). The disordered stretch occupies residues 371-430 (RGGAGGGAAEPAAARTGPVPDGPEAAVPATPGPVPAGPAAAAPLPSGPAPTAPAAAGPVP). The segment covering 379–399 (AEPAAARTGPVPDGPEAAVPA) has biased composition (low complexity).

The protein belongs to the sugar phosphate cyclases superfamily. DOI synthase family. Requires NAD(+) as cofactor. It depends on Co(2+) as a cofactor.

It carries out the reaction D-glucose 6-phosphate = 2-deoxy-L-scyllo-inosose + phosphate. It participates in metabolic intermediate biosynthesis; 2-deoxystreptamine biosynthesis; 2-deoxystreptamine from D-glucose 6-phosphate: step 1/4. It functions in the pathway antibiotic biosynthesis; neomycin biosynthesis. Functionally, catalyzes the intramolecular carbocycle formation from D-glucose-6-phosphate to 2-deoxy-scyllo-inosose (DOI). This chain is 2-deoxy-scyllo-inosose synthase (neoC), found in Streptomyces fradiae (Streptomyces roseoflavus).